Consider the following 626-residue polypeptide: MSSSLMRRVGSLAASAIIFPGIAHAASNYKLKESWEGEKILNHFHFFDNADPTNGFVTYVNQSYAESAGLVKTTDSGSLYLGVDYENVLTVDGPGRESVRIESNEYYDQGLYVVDIQHMPGSICGTWPAFWTVGPDWPTDGEIDIIEGVNKHDANKIVLHTSDTCDVGGGYKMTGDMTSSECGEASGTIGCVVQGKQGSSGDPFNEQGGGVYAMEWQEKYLKIWYFPRSSIPESLTAGTPDVSSFGTPMAHLQGSCNFKERFTHQKLILDTTFCGDWAGGVFGDSGCPVSDPSDPMLSCKNYVAENPAVYKNAYWELNSIKIYQLGGTAEVEGTQSAAAESTAAEATAAETTAAATQTANGGSIEEITTSTHSVTRTKTVSATHSTETAAVTETAAATTAAASVASEVDATNTQPVSKTKSTSYVTSTTTLCPVESSQAAATESVSRTKTTSYVTITTTLCPVESLQTANAVPSAKASTDAAAATTPAAEPHPSNAETPADSKSSADAVTAQATKTTIAVNTPNPATDSASSVPPDSIVYTAPEVTSSSSVPLFTIVSSSSQFVTVPTAAPSSFEPTDAVRDGADSYSTAASPTTPSNPVFTGVGSKVSISASVAIAAFVMLLLVN.

Positions 1–25 are cleaved as a signal peptide; that stretch reads MSSSLMRRVGSLAASAIIFPGIAHA. One can recognise a GH16 domain in the interval 33–286; that stretch reads ESWEGEKILN…WAGGVFGDSG (254 aa). N-linked (GlcNAc...) asparagine glycosylation is present at asparagine 61. The active-site Nucleophile is the glutamate 142. Glutamate 147 acts as the Proton donor in catalysis. Over residues 477 to 494 the composition is skewed to low complexity; it reads ASTDAAAATTPAAEPHPS. Residues 477–533 are disordered; sequence ASTDAAAATTPAAEPHPSNAETPADSKSSADAVTAQATKTTIAVNTPNPATDSASSV. Residues 495–533 show a composition bias toward polar residues; that stretch reads NAETPADSKSSADAVTAQATKTTIAVNTPNPATDSASSV. A lipid anchor (GPI-anchor amidated glycine) is attached at glycine 603. Positions 604–626 are cleaved as a propeptide — removed in mature form; it reads VGSKVSISASVAIAAFVMLLLVN.

It belongs to the glycosyl hydrolase 16 family.

It localises to the cell membrane. The enzyme catalyses Endohydrolysis of (1-&gt;3)- or (1-&gt;4)-linkages in beta-D-glucans when the glucose residue whose reducing group is involved in the linkage to be hydrolyzed is itself substituted at C-3.. Its function is as follows. Mixed-linked glucanase involved in the degradation of complex natural cellulosic substrates. Active on laminarin. lichenan, soluble carboxymethyl cellulose but not on pustulan. The protein is Endo-1,3(4)-beta-glucanase xgeA (xgeA) of Emericella nidulans (strain FGSC A4 / ATCC 38163 / CBS 112.46 / NRRL 194 / M139) (Aspergillus nidulans).